A 213-amino-acid polypeptide reads, in one-letter code: MSGAAPAPQDDEPRIGPNAILQTIGVLDRHLGRAERDRVMRLAGVPVPPPDSGMLPESQCRAVHQALRVDQGEAAEGLLWLSGLATGDYILANRIPGFAKAIIRVLPGFLGARLLAAAITKHAWTFVGSGRFRVESFRPLTFRIDDNPLRADAAERPSCFWHAAVFERLFGTLVWPEVTVEEISCASVSGGPCLFVLHPKGKKTAMPSSVHSG.

The protein operates within porphyrin-containing compound metabolism; bacteriochlorophyll biosynthesis (light-independent). The protein is Bacteriochlorophyll synthase 23 kDa chain (bchJ) of Rhodobacter capsulatus (strain ATCC BAA-309 / NBRC 16581 / SB1003).